A 204-amino-acid chain; its full sequence is Holliday junction branch migration complex subunit RuvA (204 aa).

Positions 1 to 64 (MIGRLQGKLI…EDAHLLFGFS (64 aa)) are domain I. Residues 65 to 143 (TKTDRTLFRE…GLRQPDFFVE (79 aa)) are domain II. The interval 144-155 (SKHITVPDIVSA) is flexible linker. Positions 156 to 204 (EKETPNDEAVAALVALGYKPPEAAKMVKKVANGDLTSEQLIREALKAAL) are domain III.

The protein belongs to the RuvA family. Homotetramer. Forms an RuvA(8)-RuvB(12)-Holliday junction (HJ) complex. HJ DNA is sandwiched between 2 RuvA tetramers; dsDNA enters through RuvA and exits via RuvB. An RuvB hexamer assembles on each DNA strand where it exits the tetramer. Each RuvB hexamer is contacted by two RuvA subunits (via domain III) on 2 adjacent RuvB subunits; this complex drives branch migration. In the full resolvosome a probable DNA-RuvA(4)-RuvB(12)-RuvC(2) complex forms which resolves the HJ.

The protein resides in the cytoplasm. Its function is as follows. The RuvA-RuvB-RuvC complex processes Holliday junction (HJ) DNA during genetic recombination and DNA repair, while the RuvA-RuvB complex plays an important role in the rescue of blocked DNA replication forks via replication fork reversal (RFR). RuvA specifically binds to HJ cruciform DNA, conferring on it an open structure. The RuvB hexamer acts as an ATP-dependent pump, pulling dsDNA into and through the RuvAB complex. HJ branch migration allows RuvC to scan DNA until it finds its consensus sequence, where it cleaves and resolves the cruciform DNA. The sequence is that of Holliday junction branch migration complex subunit RuvA from Actinobacillus succinogenes (strain ATCC 55618 / DSM 22257 / CCUG 43843 / 130Z).